Here is a 307-residue protein sequence, read N- to C-terminus: 4-hydroxythreonine-4-phosphate dehydrogenase (307 aa).

Histidine 121 and threonine 122 together coordinate substrate. A divalent metal cation is bound by residues histidine 150, histidine 189, and histidine 245. Residues lysine 253, asparagine 262, and arginine 271 each contribute to the substrate site.

It belongs to the PdxA family. In terms of assembly, homodimer. The cofactor is Zn(2+). Mg(2+) is required as a cofactor. Co(2+) serves as cofactor.

It localises to the cytoplasm. The enzyme catalyses 4-(phosphooxy)-L-threonine + NAD(+) = 3-amino-2-oxopropyl phosphate + CO2 + NADH. It functions in the pathway cofactor biosynthesis; pyridoxine 5'-phosphate biosynthesis; pyridoxine 5'-phosphate from D-erythrose 4-phosphate: step 4/5. Catalyzes the NAD(P)-dependent oxidation of 4-(phosphooxy)-L-threonine (HTP) into 2-amino-3-oxo-4-(phosphooxy)butyric acid which spontaneously decarboxylates to form 3-amino-2-oxopropyl phosphate (AHAP). This chain is 4-hydroxythreonine-4-phosphate dehydrogenase, found in Sulfurimonas denitrificans (strain ATCC 33889 / DSM 1251) (Thiomicrospira denitrificans (strain ATCC 33889 / DSM 1251)).